Reading from the N-terminus, the 166-residue chain is 2-amino-4-hydroxy-6-hydroxymethyldihydropteridine pyrophosphokinase (166 aa).

It belongs to the HPPK family.

The catalysed reaction is 6-hydroxymethyl-7,8-dihydropterin + ATP = (7,8-dihydropterin-6-yl)methyl diphosphate + AMP + H(+). Its pathway is cofactor biosynthesis; tetrahydrofolate biosynthesis; 2-amino-4-hydroxy-6-hydroxymethyl-7,8-dihydropteridine diphosphate from 7,8-dihydroneopterin triphosphate: step 4/4. Functionally, catalyzes the transfer of pyrophosphate from adenosine triphosphate (ATP) to 6-hydroxymethyl-7,8-dihydropterin, an enzymatic step in folate biosynthesis pathway. The polypeptide is 2-amino-4-hydroxy-6-hydroxymethyldihydropteridine pyrophosphokinase (folK) (Streptococcus pyogenes serotype M18 (strain MGAS8232)).